We begin with the raw amino-acid sequence, 742 residues long: Protein CdcH (742 aa).

Residues 230 to 237 (GPPGTGKT) and 503 to 510 (GPPGTGKT) contribute to the ATP site. The tract at residues 722 to 742 (FKGSQGPNVNSRQGSEHIGFQ) is disordered. Positions 723-734 (KGSQGPNVNSRQ) are enriched in polar residues.

It belongs to the AAA ATPase family. CDC48 subfamily.

May be part of a transduction pathway connecting light to cell division. The protein is Protein CdcH (cdcH) of Halobacterium salinarum (strain ATCC 700922 / JCM 11081 / NRC-1) (Halobacterium halobium).